The following is an 880-amino-acid chain: MGISSKNGPKKMGRAKTFTGCWTCRGRKVKCDLRHPHCQRCEKSNLPCGGYDIKLRWSKPMQFDPYGVPIPQNSPATTTNLSGSVDEPQYQRRNIDFVRYDEEYVYHEDMDDELTMLHTPPIEKISDNKTWIIKKFGVFKGTDKIDKQYAPRKKRNRKRVAKSLESSASISLSSLPSSSTISFPIRHIEDKLRNKGHVKTGILSANDGVPPTPNLLDYDWNNLNITGYEWISSELRDDALLSAVTLQGHHLGHTQPQEISLEENSNVVSGEEHVNAKEHGCAFEADNQGSSTLPNKAASANDKLYQQNLKLLFQKNSSNSEEPDPQALIDDVFVNIEPRSLPASDLNKITLAPPNEESRMPKSMLELTSYSSDLPPELVDIIPKTDLTVHGLARFLLNHYFNNVADKMTVVVLEKNPWKTLYFPRALMALGDLAGLGQSSNSRNALLNALLAVSCFHLQSKYPRNYKLQKYFLGLGIELRNQASNFLRLCLNTKSSIPEKYKDVLTAILSMNSIDVVWGTMADCQDHLALCEDFVESRMKLRPNISEKTKTLHRIFSFLKLIQDSTALDKVRAKEIVILPSEEDDNYKPLDTSNATTSSSEPRVDVVQEGLFREALNENDGKIHIEFVKEPITNVSADSTPSSTTPPIFTNIATESYYNKSDISKLVSKTDENIIGTDSLYGLPNSLILLFSDCVRIVRHNEYYNLTYLPVPRKFNELSLNFEKRLLKWKSEWNFHQENSEGKSFINSTAEALYHHTMSFYFSLIIYYFTMARSLNCQFLQNYVAKVLDHLNAMEELVDQKKVKIVPLIWQGFMAGCACTDENRQQEFRRWAAKLAESGVGSYWGARQVMLEVWRRRKEDEPGDNWYSVYKDWEMNLMLS.

Positions 21–48 form a DNA-binding region, zn(2)-C6 fungal-type; that stretch reads CWTCRGRKVKCDLRHPHCQRCEKSNLPC.

In terms of assembly, interacts with ARG80 and MCM1.

The protein resides in the cytoplasm. Its subcellular location is the nucleus. In terms of biological role, with ARG80, ARG82 and MCM1, coordinates the expression of arginine anabolic and catabolic genes in response to arginine. The protein is Arginine metabolism regulation protein II (ARG81) of Saccharomyces cerevisiae (strain ATCC 204508 / S288c) (Baker's yeast).